A 335-amino-acid polypeptide reads, in one-letter code: Putative T-box protein 7 (335 aa).

Positions 73–246 (LWSTFLECGT…NNPFAKGFRN (174 aa)) form a DNA-binding region, T-box.

The protein resides in the nucleus. In Caenorhabditis elegans, this protein is Putative T-box protein 7.